We begin with the raw amino-acid sequence, 198 residues long: Suppressor of cytokine signaling 2 (198 aa).

The tract at residues Met1–Pro29 is disordered. Residues Met1 to Ser75 are interaction with AREL1. A Phosphoserine modification is found at Ser30. One can recognise an SH2 domain in the interval Trp48–Leu156. Position 52 is a phosphoserine; by PKC (Ser52). Residues Tyr151 to Gln197 enclose the SOCS box domain. Lys173 participates in a covalent cross-link: Glycyl lysine isopeptide (Lys-Gly) (interchain with G-Cter in ubiquitin).

As to quaternary structure, substrate-recognition component of the ECS(SOCS2) complex, composed of SOCS2, CUL5, ELOB, ELOC and RNF7/RBX2. Interacts with IGF1R. Interacts with DCUN1D1. Post-translationally, ubiquitinated; mediated by AREL1 and leading to its subsequent proteasomal degradation. Ubiquitination is dependent on its phosphorylation at Ser-52, by PKC. Ubiquitination is stimulated by LPS. In terms of processing, phosphorylation at Ser-52 by PKC facilitates its ubiquitination and proteasomal degradation. High expression in heart, placenta, lung, kidney and prostate. Predominantly expressed in pulmonary epithelia cells, specifically type II pneumocytes.

The protein resides in the cytoplasm. The protein operates within protein modification; protein ubiquitination. With respect to regulation, substrate-binding is prevented by the covalent inhibitor MN551 that cross-links with Cys-111. Also inhibited by a MN551 derivative, MN714, which contains a pivaloyloxymethyl that allows cell permeability. Its function is as follows. Substrate-recognition component of a cullin-5-RING E3 ubiquitin-protein ligase complex (ECS complex, also named CRL5 complex), which mediates the ubiquitination and subsequent proteasomal degradation of target proteins, such as EPOR and GHR. Specifically recognizes and binds phosphorylated proteins via its SH2 domain, promoting their ubiquitination. The ECS(SOCS2) complex acts as a key regulator of growth hormone receptor (GHR) levels by mediating ubiquitination and degradation of GHR, following GHR phosphorylation by JAK2. The ECS(SOCS2) also catalyzes ubiquitination and degradation of JAK2-phosphorylated EPOR. The protein is Suppressor of cytokine signaling 2 of Homo sapiens (Human).